The following is a 213-amino-acid chain: Nickel-cobalt-cadmium resistance protein NccN (213 aa).

A run of 4 helical transmembrane segments spans residues 24-44, 48-68, 113-133, and 180-200; these read IGIW…GHSQ, TWIS…ATVG, ESIT…PAVI, and NLAD…VELA.

To A.eutrophus CzcN.

It localises to the cell inner membrane. In terms of biological role, component of the NCC cation-efflux system that confers resistance to nickel, cobalt and cadmium. Appears to be involved in metal specificity but affects only nickel resistance. May be involved in nickel transport. In Alcaligenes xylosoxydans xylosoxydans (Achromobacter xylosoxidans), this protein is Nickel-cobalt-cadmium resistance protein NccN (nccN).